Consider the following 273-residue polypeptide: Large ribosomal subunit protein uL2 (273 aa).

2 disordered regions span residues 28–54 and 221–273; these read KPYAPLLEKNSKSGGRNNNGRITTRHI and RGTA…RRTK. The span at 39–48 shows a compositional bias: low complexity; it reads KSGGRNNNGR.

It belongs to the universal ribosomal protein uL2 family. In terms of assembly, part of the 50S ribosomal subunit. Forms a bridge to the 30S subunit in the 70S ribosome.

One of the primary rRNA binding proteins. Required for association of the 30S and 50S subunits to form the 70S ribosome, for tRNA binding and peptide bond formation. It has been suggested to have peptidyltransferase activity; this is somewhat controversial. Makes several contacts with the 16S rRNA in the 70S ribosome. This Pectobacterium carotovorum subsp. carotovorum (strain PC1) protein is Large ribosomal subunit protein uL2.